The following is a 117-amino-acid chain: Large ribosomal subunit protein uL18 (117 aa).

Belongs to the universal ribosomal protein uL18 family. In terms of assembly, part of the 50S ribosomal subunit; part of the 5S rRNA/L5/L18/L25 subcomplex. Contacts the 5S and 23S rRNAs.

In terms of biological role, this is one of the proteins that bind and probably mediate the attachment of the 5S RNA into the large ribosomal subunit, where it forms part of the central protuberance. The chain is Large ribosomal subunit protein uL18 from Leuconostoc citreum (strain KM20).